We begin with the raw amino-acid sequence, 346 residues long: MSCVSQSAGSLPPLCQWSGLEPICKIPPSQQFQQIHCPLITKHRSSKLCDLLPPGVTDSIYDFLANLPIILLFVASVPARFIYCIVYNFLLNFDQFILGIEYSIINPILDFFTAPLVYLAVGLTDGENNSAFSPPYLIGVLTDACLPGIVSGIYQAIGDIFYTIGYGIGFILGLFIDLYDIILYSICTLVTFGLTFGLCLSYDIVGIFKGAGGLKFTIYPFSFLAGLLQNYINCGCVLGSYPTAYIILCLNFGGSCPSCCPCGVGFTPPACPAIPNGTPPSPVNLSVTGQGCVSEYPHSENGSGGSGGSGSGSGSGGSGSGGNSGSGGSGSGSSGSGGNSGSGNNG.

6 helical membrane-spanning segments follow: residues 67–87, 104–124, 134–154, 156–176, 181–201, and 219–241; these read LPIILLFVASVPARFIYCIVY, IINPILDFFTAPLVYLAVGLT, PPYLIGVLTDACLPGIVSGIY, AIGDIFYTIGYGIGFILGLFI, IILYSICTLVTFGLTFGLCLS, and YPFSFLAGLLQNYINCGCVLGSY. Positions 294-346 are disordered; the sequence is SEYPHSENGSGGSGGSGSGSGSGGSGSGGNSGSGGSGSGSSGSGGNSGSGNNG. Residues 302-346 are compositionally biased toward gly residues; it reads GSGGSGGSGSGSGSGGSGSGGNSGSGGSGSGSSGSGGNSGSGNNG.

The protein localises to the host membrane. The protein is Putative transmembrane protein ORF346 of Acidianus bottle-shaped virus (isolate Italy/Pozzuoli) (ABV).